The sequence spans 340 residues: Heat-inducible transcription repressor HrcA (340 aa).

This sequence belongs to the HrcA family.

Functionally, negative regulator of class I heat shock genes (grpE-dnaK-dnaJ and groELS operons). Prevents heat-shock induction of these operons. The sequence is that of Heat-inducible transcription repressor HrcA from Burkholderia cenocepacia (strain ATCC BAA-245 / DSM 16553 / LMG 16656 / NCTC 13227 / J2315 / CF5610) (Burkholderia cepacia (strain J2315)).